A 299-amino-acid polypeptide reads, in one-letter code: Proline iminopeptidase (299 aa).

The AB hydrolase-1 domain maps to 26–272; that stretch reads VLLLAGGPGF…QFLYCANGSH (247 aa). The active-site Nucleophile is the serine 103. Aspartate 245 is a catalytic residue. The active-site Proton donor is histidine 272.

Belongs to the peptidase S33 family. As to quaternary structure, monomer.

It catalyses the reaction Release of N-terminal proline from a peptide.. Releases the N-terminal proline from various substrates. The chain is Proline iminopeptidase from Chitinophaga pinensis (strain ATCC 43595 / DSM 2588 / LMG 13176 / NBRC 15968 / NCIMB 11800 / UQM 2034).